A 257-amino-acid chain; its full sequence is MPKIGIIGGSGVYGVFEPKEVVKVHTPYGRPSAPIEIGEIEGVEVAFIPRHGKYHEFPPHQVPYRANIWALHELGVERVIAINAVGSLKEEYKPGDIVIIDQFIDFTKKREYTFYNGPKVAHVSMADPFCPELRKIFIETAKELNLPVHERGTYVCIEGPRFSTRAESRMFRQFADVIGMTLVPEVNLARELGMCYVNISTVTDYDVWAEKPVDAQEVLRVMKENEEKVQKLLKRAIPKIPEERKCGCADVLKTMFV.

Phosphate-binding positions include serine 10 and 50–51 (RH). Methionine 180 contacts substrate. Residue threonine 181 participates in phosphate binding. 204-206 (DYD) serves as a coordination point for substrate.

Belongs to the PNP/MTAP phosphorylase family. MTAP subfamily. Homohexamer. Dimer of a homotrimer.

It carries out the reaction S-methyl-5'-thioadenosine + phosphate = 5-(methylsulfanyl)-alpha-D-ribose 1-phosphate + adenine. The protein operates within amino-acid biosynthesis; L-methionine biosynthesis via salvage pathway; S-methyl-5-thio-alpha-D-ribose 1-phosphate from S-methyl-5'-thioadenosine (phosphorylase route): step 1/1. Functionally, catalyzes the reversible phosphorylation of S-methyl-5'-thioadenosine (MTA) to adenine and 5-methylthioribose-1-phosphate. Involved in the breakdown of MTA, a major by-product of polyamine biosynthesis. Responsible for the first step in the methionine salvage pathway after MTA has been generated from S-adenosylmethionine. Has broad substrate specificity with 6-aminopurine nucleosides as preferred substrates. In Pyrococcus horikoshii (strain ATCC 700860 / DSM 12428 / JCM 9974 / NBRC 100139 / OT-3), this protein is S-methyl-5'-thioadenosine phosphorylase.